The sequence spans 436 residues: MQLSVVDPTWELLDPNPDIRALFLEFNDTFFWGQLSGIEVKWSARMTLCAGVCSYEGRGGLCSIRLSEPLLKLRPRKDLVQTLLHEMIHALLFVTHNNKDHDSHGPEFCKHMERINKRTGANISVYHNFHDEVDEYRKHWWLCNGPCQKRKPYFGYVKRAMNRAPSSLDPWWADHQRTCGGEFVKIKEPENYSQKRKRNNDPTKSELGNSSHVKINKGKSNGVDIRTVIPFSGTGYKLFEPSKSDAQLKIQNDNPTKDKAVMHHTPPSTNQTDSTFLSRKIVSAKKISVANTKVFINLNGSPIKLPSSSNNKSHQDSSKQKSVLHFFKTQKDNSIDLTSSSQSFPSTSQGPNREETEHFYKKLQMDDKESKDTFIIHSLNKTNVSDSLNNKSCAGPAATINSGLNHTKVCCPVCGTEIFESKINDHLDTCLQNYNT.

Residues 19–186 (IRALFLEFND…RTCGGEFVKI (168 aa)) enclose the SprT-like domain. Residue His85 participates in Zn(2+) binding. The active site involves Glu86. Residues His89 and His104 each contribute to the Zn(2+) site. The disordered stretch occupies residues 184 to 219 (VKIKEPENYSQKRKRNNDPTKSELGNSSHVKINKGK). The SHP-box motif lies at 231-239 (FSGTGYKLF). A PIP-box motif is present at residues 271 to 277 (QTDSTFL). Positions 300 to 321 (GSPIKLPSSSNNKSHQDSSKQK) are disordered. The UBZ4-type zinc-finger motif lies at 408-435 (KVCCPVCGTEIFESKINDHLDTCLQNYN). Cys411, Cys414, His426, and Cys430 together coordinate Zn(2+).

This sequence belongs to the Spartan family. Homodimer. It depends on Zn(2+) as a cofactor. In terms of processing, autocatalytically cleaved in response to double-stranded DNA-binding: autocatalytic cleavage takes place in trans and leads to inactivation.

It localises to the nucleus. Its subcellular location is the chromosome. With respect to regulation, DNA-binding activates the protease activity: single-stranded DNA-binding specifically activates ability to cleave covalent DNA-protein cross-links (DPCs). In contrast, double-stranded DNA-binding specifically activates autocatalytic cleavage, and subsequent inactivation. Its function is as follows. DNA-dependent metalloendopeptidase that mediates the proteolytic cleavage of covalent DNA-protein cross-links (DPCs) during DNA synthesis, thereby playing a key role in maintaining genomic integrity. DPCs are highly toxic DNA lesions that interfere with essential chromatin transactions, such as replication and transcription, and which are induced by reactive agents, such as UV light or formaldehyde. Associates with the DNA replication machinery and specifically removes DPCs during DNA synthesis. Catalyzes proteolytic cleavage of the hmces DNA-protein cross-link following unfolding by the brip1/fancj helicase. Acts as a pleiotropic protease for DNA-binding proteins cross-linked with DNA, such as top1, top2a, histones H3 and H4. Mediates degradation of DPCs that are not ubiquitinated, while it is not able to degrade ubiquitinated DPCs. SPRTN activation requires polymerase collision with DPCs followed by helicase bypass of DPCs. May also act as a 'reader' of ubiquitinated pcna: facilitates chromatin association of rad18 and is required for efficient pcna monoubiquitination, promoting a feed-forward loop to enhance pcna ubiquitination and translesion DNA synthesis. Acts as a regulator of translesion DNA synthesis by recruiting vcp/p97 to sites of DNA damage. This Xenopus tropicalis (Western clawed frog) protein is DNA-dependent metalloprotease SPRTN.